Reading from the N-terminus, the 893-residue chain is Translation initiation factor IF-2 (893 aa).

Residues 49-303 (LNREAGSGPD…KGSSLQQGFQ (255 aa)) form a disordered region. Over residues 68–82 (STLNIPGTGGKSKSV) the composition is skewed to polar residues. Composition is skewed to basic and acidic residues over residues 93–159 (VKRD…KDKV) and 166–216 (DMTK…EENK). A compositionally biased stretch (basic residues) spans 254–269 (GRGRNAKAARPAKKGN). Residues 270 to 283 (KHAESKADREEARA) show a composition bias toward basic and acidic residues. The tr-type G domain maps to 392–561 (PRAPVVTIMG…LLQAEVLELK (170 aa)). Residues 401–408 (GHVDHGKT) form a G1 region. Residue 401–408 (GHVDHGKT) participates in GTP binding. A G2 region spans residues 426-430 (GITQH). A G3 region spans residues 447-450 (DTPG). GTP-binding positions include 447-451 (DTPGH) and 501-504 (NKID). Positions 501–504 (NKID) are G4. A G5 region spans residues 537 to 539 (SAK).

Belongs to the TRAFAC class translation factor GTPase superfamily. Classic translation factor GTPase family. IF-2 subfamily.

The protein localises to the cytoplasm. Its function is as follows. One of the essential components for the initiation of protein synthesis. Protects formylmethionyl-tRNA from spontaneous hydrolysis and promotes its binding to the 30S ribosomal subunits. Also involved in the hydrolysis of GTP during the formation of the 70S ribosomal complex. The protein is Translation initiation factor IF-2 of Salmonella arizonae (strain ATCC BAA-731 / CDC346-86 / RSK2980).